Consider the following 244-residue polypeptide: Probable histone-lysine N-methyltransferase set-23 (244 aa).

A Pre-SET domain is found at E25–G86. Zn(2+) contacts are provided by C27, C29, C33, C39, C41, C65, C69, C71, and C78. Residues K89–G213 form the SET domain. Residues K101–F103, D141, Y143, R170, and N173–H174 each bind S-adenosyl-L-methionine. The Zn(2+) site is built by C176, C225, C227, and C232. The Post-SET domain maps to N221–P237.

Belongs to the class V-like SAM-binding methyltransferase superfamily. Histone-lysine methyltransferase family. Suvar3-9 subfamily.

The protein localises to the nucleus. It localises to the chromosome. The catalysed reaction is L-lysyl-[histone] + S-adenosyl-L-methionine = N(6)-methyl-L-lysyl-[histone] + S-adenosyl-L-homocysteine + H(+). Probable histone methyltransferase. Required for embryonic development. The chain is Probable histone-lysine N-methyltransferase set-23 (set-23) from Caenorhabditis elegans.